The sequence spans 450 residues: Phosphoglucosamine mutase (450 aa).

The Phosphoserine intermediate role is filled by Ser101. The Mg(2+) site is built by Ser101, Asp240, Asp242, and Asp244. Ser101 is subject to Phosphoserine.

Belongs to the phosphohexose mutase family. Mg(2+) serves as cofactor. In terms of processing, activated by phosphorylation.

It catalyses the reaction alpha-D-glucosamine 1-phosphate = D-glucosamine 6-phosphate. Catalyzes the conversion of glucosamine-6-phosphate to glucosamine-1-phosphate. This chain is Phosphoglucosamine mutase, found in Streptococcus thermophilus (strain CNRZ 1066).